The following is a 212-amino-acid chain: MWEQRRQKVVFSLTILVRYRLKQSMAKKISKNSRAARQSDALEPEVKDLSELPRAEKTDLTNILIRTAAKNEALLEAKISKKANKSKRGKKLNKKALEDKLANSISSMDRDRLVKALNFTNRLDGKIAKSISRAKYIQNTRKAGWDSTNETIKKELAFLNGGLSVQAKSASEGNAEKEDEEIPEVFDSLAEDNTVQKTPTNRFGVLPDDVEE.

Disordered stretches follow at residues 28–48 and 188–212; these read KISKNSRAARQSDALEPEVKD and SLAEDNTVQKTPTNRFGVLPDDVEE. At Ser188 the chain carries Phosphoserine. Residues 191-201 are compositionally biased toward polar residues; sequence EDNTVQKTPTN.

This sequence belongs to the ECM1 family. In terms of assembly, associates with the pre-60S ribosomal particle and the nucleopore complex.

It localises to the nucleus. Its subcellular location is the nucleolus. It is found in the cytoplasm. Its function is as follows. Pre-ribosomal factor involved in 60S ribosomal protein subunit export from the nucleus. The polypeptide is Shuttling pre-60S factor ECM1 (ECM1) (Saccharomyces cerevisiae (strain ATCC 204508 / S288c) (Baker's yeast)).